The sequence spans 154 residues: Glycosylation-dependent cell adhesion molecule 1 (154 aa).

A signal peptide spans 1–18 (MKFLCILLLASLAATSLA). A glycan (O-linked (GalNAc...) threonine; partial) is linked at threonine 34. Phosphoserine is present on residues serine 48, serine 53, serine 57, serine 59, and serine 65. Positions 51 to 65 (DLSKEPSISREDLIS) are enriched in basic and acidic residues. The interval 51 to 115 (DLSKEPSISR…EHAPSDASTT (65 aa)) is disordered. An N-linked (GlcNAc...) asparagine glycan is attached at asparagine 96.

The protein belongs to the PP3/GlyCAM-1 family. In terms of tissue distribution, highly and specifically expressed in the lactating mammary gland.

It is found in the membrane. The chain is Glycosylation-dependent cell adhesion molecule 1 (GLYCAM1) from Capra hircus (Goat).